A 301-amino-acid polypeptide reads, in one-letter code: CRISPR-associated endonuclease Cas1 (301 aa).

The Mn(2+) site is built by glutamate 133, histidine 200, and aspartate 213.

This sequence belongs to the CRISPR-associated endonuclease Cas1 family. In terms of assembly, homodimer, forms a heterotetramer with a Cas2 homodimer. Mg(2+) serves as cofactor. The cofactor is Mn(2+).

Its function is as follows. CRISPR (clustered regularly interspaced short palindromic repeat), is an adaptive immune system that provides protection against mobile genetic elements (viruses, transposable elements and conjugative plasmids). CRISPR clusters contain spacers, sequences complementary to antecedent mobile elements, and target invading nucleic acids. CRISPR clusters are transcribed and processed into CRISPR RNA (crRNA). Acts as a dsDNA endonuclease. Involved in the integration of spacer DNA into the CRISPR cassette. This chain is CRISPR-associated endonuclease Cas1, found in Clostridium sp. (strain SY8519).